A 249-amino-acid polypeptide reads, in one-letter code: 1-(5-phosphoribosyl)-5-[(5-phosphoribosylamino)methylideneamino] imidazole-4-carboxamide isomerase (249 aa).

Asp11 serves as the catalytic Proton acceptor. The active-site Proton donor is the Asp133.

Belongs to the HisA/HisF family.

It is found in the cytoplasm. It carries out the reaction 1-(5-phospho-beta-D-ribosyl)-5-[(5-phospho-beta-D-ribosylamino)methylideneamino]imidazole-4-carboxamide = 5-[(5-phospho-1-deoxy-D-ribulos-1-ylimino)methylamino]-1-(5-phospho-beta-D-ribosyl)imidazole-4-carboxamide. It functions in the pathway amino-acid biosynthesis; L-histidine biosynthesis; L-histidine from 5-phospho-alpha-D-ribose 1-diphosphate: step 4/9. The chain is 1-(5-phosphoribosyl)-5-[(5-phosphoribosylamino)methylideneamino] imidazole-4-carboxamide isomerase from Actinobacillus succinogenes (strain ATCC 55618 / DSM 22257 / CCUG 43843 / 130Z).